A 217-amino-acid polypeptide reads, in one-letter code: ATP-dependent Clp protease proteolytic subunit (217 aa).

The Nucleophile role is filled by serine 119. Histidine 144 is a catalytic residue.

Belongs to the peptidase S14 family. As to quaternary structure, fourteen ClpP subunits assemble into 2 heptameric rings which stack back to back to give a disk-like structure with a central cavity, resembling the structure of eukaryotic proteasomes.

The protein resides in the cytoplasm. The enzyme catalyses Hydrolysis of proteins to small peptides in the presence of ATP and magnesium. alpha-casein is the usual test substrate. In the absence of ATP, only oligopeptides shorter than five residues are hydrolyzed (such as succinyl-Leu-Tyr-|-NHMec, and Leu-Tyr-Leu-|-Tyr-Trp, in which cleavage of the -Tyr-|-Leu- and -Tyr-|-Trp bonds also occurs).. Cleaves peptides in various proteins in a process that requires ATP hydrolysis. Has a chymotrypsin-like activity. Plays a major role in the degradation of misfolded proteins. The sequence is that of ATP-dependent Clp protease proteolytic subunit from Bordetella petrii (strain ATCC BAA-461 / DSM 12804 / CCUG 43448).